Reading from the N-terminus, the 427-residue chain is Vitamin D3 receptor (427 aa).

The segment at residues 21–96 (PRICGVCGDR…IGMMKEFILT (76 aa)) is a DNA-binding region (nuclear receptor). The Zn(2+) site is built by C24, C27, C41, C44, C60, C66, C76, and C79. 2 consecutive NR C4-type zinc fingers follow at residues 24–44 (CGVC…CEGC) and 60–84 (CPFN…LKRC). Positions 97–126 (DEEVQRKREMILKRKEEEALKDSLRPKLSE) are hinge. One can recognise an NR LBD domain in the interval 127 to 423 (EQQRIIAILL…LTPLVLEVFG (297 aa)). A calcitriol-binding site is contributed by Y143. A disordered region spans residues 158–183 (RVNDGGGSHPSRPNSRHTPSFSGDSS). S237 contacts calcitriol. Residues 246 to 264 (KMIPGFRDLTSEDQIVLLK) form an interaction with coactivator LXXLL motif region. Positions 274, 278, 305, and 397 each coordinate calcitriol. The short motif at 416-424 (PLVLEVFGN) is the 9aaTAD element.

It belongs to the nuclear hormone receptor family. NR1 subfamily. As to quaternary structure, homodimer in the absence of bound vitamin D3. Heterodimer with RXRA after vitamin D3 binding. Interacts with MED1, NCOA1, NCOA2, NCOA3 and NCOA6 coactivators, leading to a strong increase of transcription of target genes. Interacts with the corepressor NCOR1. Interacts with SNW1. Interacts with IRX4, the interaction does not affect its transactivation activity. In terms of processing, ubiquitinated by UBR5, leading to its degradation: UBR5 specifically recognizes and binds ligand-bound VDR when it is not associated with coactivators (NCOAs). In presence of NCOAs, the UBR5-degron is not accessible, preventing its ubiquitination and degradation.

The protein localises to the nucleus. It is found in the cytoplasm. In terms of biological role, nuclear receptor for calcitriol, the active form of vitamin D3 which mediates the action of this vitamin on cells. Enters the nucleus upon vitamin D3 binding where it forms heterodimers with the retinoid X receptor/RXR. The VDR-RXR heterodimers bind to specific response elements on DNA and activate the transcription of vitamin D3-responsive target genes. Plays a central role in calcium homeostasis. This chain is Vitamin D3 receptor (VDR), found in Saguinus oedipus (Cotton-top tamarin).